Consider the following 209-residue polypeptide: Protein lin-28 homolog A (209 aa).

Residues 1–31 (MGSVSNQQFAGGCAKAAEKAPEEAPPDAARA) form a disordered region. The residue at position 2 (G2) is an N-acetylglycine. Phosphoserine is present on S3. A CSD domain is found at 39–112 (HGAGICKWFN…GLESIRVTGP (74 aa)). The tract at residues 113-136 (GGVFCIGSERRPKGKNMQKRRSKG) is flexible linker. Position 120 is a phosphoserine (S120). CCHC-type zinc fingers lie at residues 137 to 154 (DRCY…ECKL) and 159 to 176 (KKCH…SCPL). The segment at 177–209 (KAQQGPSSQGKPAYFREEEEEIHSPALLPEAQN) is disordered. The residue at position 200 (S200) is a Phosphoserine.

Belongs to the lin-28 family. Monomer. During skeletal muscle differentiation, associated with translation initiation complexes in the polysomal compartment. Directly interacts with EIF3S2. Interacts with NCL in an RNA-dependent manner. Interacts with TUT4 in the presence of pre-let-7 RNA. In terms of tissue distribution, expressed in embryonic stem cells (ES cells), spermatagonia and testis. Expressed in numerous epithelial tissues including the epithelia of the small intestine, the intralobular duct epithelium of the mammary gland and the epithelia of Henle's loop in the kidney and in the collecting duct (at protein level). Also expressed in the myocardium and skeletal muscle (at protein level).

Its subcellular location is the cytoplasm. It is found in the rough endoplasmic reticulum. The protein localises to the P-body. The protein resides in the stress granule. It localises to the nucleus. Its subcellular location is the nucleolus. Its function is as follows. RNA-binding protein that inhibits processing of pre-let-7 miRNAs and regulates translation of mRNAs that control developmental timing, pluripotency and metabolism. Seems to recognize a common structural G-quartet (G4) feature in its miRNA and mRNA targets. 'Translational enhancer' that drives specific mRNAs to polysomes and increases the efficiency of protein synthesis. Its association with the translational machinery and target mRNAs results in an increased number of initiation events per molecule of mRNA and, indirectly, in mRNA stabilization. Binds IGF2 mRNA, MYOD1 mRNA, ARBP/36B4 ribosomal protein mRNA and its own mRNA. Essential for skeletal muscle differentiation program through the translational up-regulation of IGF2 expression. Suppressor of microRNA (miRNA) biogenesis, including that of let-7, miR107, miR-143 and miR-200c. Specifically binds the miRNA precursors (pre-miRNAs), recognizing an 5'-GGAG-3' motif found in pre-miRNA terminal loop, and recruits TUT4 and TUT7 uridylyltransferaseS. This results in the terminal uridylation of target pre-miRNAs. Uridylated pre-miRNAs fail to be processed by Dicer and undergo degradation. The repression of let-7 expression is required for normal development and contributes to maintain the pluripotent state by preventing let-7-mediated differentiation of embryonic stem cells. Localized to the periendoplasmic reticulum area, binds to a large number of spliced mRNAs and inhibits the translation of mRNAs destined for the ER, reducing the synthesis of transmembrane proteins, ER or Golgi lumen proteins, and secretory proteins. Binds to and enhances the translation of mRNAs for several metabolic enzymes, such as PFKP, PDHA1 or SDHA, increasing glycolysis and oxidative phosphorylation. Which, with the let-7 repression may enhance tissue repair in adult tissue. In Mus musculus (Mouse), this protein is Protein lin-28 homolog A (Lin28a).